A 204-amino-acid polypeptide reads, in one-letter code: Guanylate kinase (204 aa).

The region spanning 18 to 196 (PKLFTISAPA…SYEILKSIFI (179 aa)) is the Guanylate kinase-like domain. Residue 25–32 (APAGAGKT) participates in ATP binding.

Belongs to the guanylate kinase family.

It localises to the cytoplasm. The catalysed reaction is GMP + ATP = GDP + ADP. Functionally, essential for recycling GMP and indirectly, cGMP. The protein is Guanylate kinase of Chlamydia caviae (strain ATCC VR-813 / DSM 19441 / 03DC25 / GPIC) (Chlamydophila caviae).